Reading from the N-terminus, the 247-residue chain is MKFFQEKISIKETNILLKVDNPKFFKMAKNTIINERLNLENYILRNPIFLTSYSPVEVPDNAPEIIKLMAEAGFNADVGPMAAVAGTFSQLIIENLIENDCKNAISENGGDICLKCEMDTTVGLYAGNSSLSGNLGFKLKKEKMKNGYGICTSSGTVGHSVSLGNADSITVFSKSAIIADAAATSIGNFAVGNAVDAINKCLEKAETISKIDGVFVCMGEHAGKIGKIPQLIKTDKKEVLGNVFEMV.

Belongs to the UPF0280 family.

In Methanococcus maripaludis (strain DSM 14266 / JCM 13030 / NBRC 101832 / S2 / LL), this protein is UPF0280 protein MMP1236.